The sequence spans 144 residues: Acidic phospholipase A2 (144 aa).

The signal sequence occupies residues 1-19 (MYPAHLLVLLAVCVSLLGA). The propeptide occupies 20 to 27 (SDIPPLPL). 7 cysteine pairs are disulfide-bonded: cysteine 38/cysteine 98, cysteine 54/cysteine 143, cysteine 56/cysteine 72, cysteine 71/cysteine 125, cysteine 78/cysteine 118, cysteine 87/cysteine 111, and cysteine 105/cysteine 116. Ca(2+) contacts are provided by tyrosine 55, glycine 57, and glycine 59. The active site involves histidine 75. Position 76 (aspartate 76) interacts with Ca(2+). Aspartate 119 is an active-site residue.

It belongs to the phospholipase A2 family. Group I subfamily. D49 sub-subfamily. The cofactor is Ca(2+). In terms of tissue distribution, expressed by the venom gland.

It is found in the secreted. The enzyme catalyses a 1,2-diacyl-sn-glycero-3-phosphocholine + H2O = a 1-acyl-sn-glycero-3-phosphocholine + a fatty acid + H(+). Its function is as follows. PLA2 catalyzes the calcium-dependent hydrolysis of the 2-acyl groups in 3-sn-phosphoglycerides. In Aipysurus laevis (Olive sea snake), this protein is Acidic phospholipase A2.